The following is a 241-amino-acid chain: ATP synthase subunit a (241 aa).

8 helical membrane passes run 29 to 49 (NSSL…LFGI), 54 to 74 (VIPG…ISII), 86 to 106 (IPLI…GVLP), 114 to 134 (HVIV…IVGF), 153 to 173 (WLAP…PVSL), 177 to 197 (LAAN…FIVN), 200 to 220 (IFFT…EVFV), and 221 to 241 (AILQ…DAVK).

The protein belongs to the ATPase A chain family. As to quaternary structure, F-type ATPases have 2 components, CF(1) - the catalytic core - and CF(0) - the membrane proton channel. CF(1) has five subunits: alpha(3), beta(3), gamma(1), delta(1), epsilon(1). CF(0) has three main subunits: a(1), b(2) and c(9-12). The alpha and beta chains form an alternating ring which encloses part of the gamma chain. CF(1) is attached to CF(0) by a central stalk formed by the gamma and epsilon chains, while a peripheral stalk is formed by the delta and b chains.

The protein resides in the cell inner membrane. Its function is as follows. Key component of the proton channel; it plays a direct role in the translocation of protons across the membrane. The protein is ATP synthase subunit a of Wolbachia sp. subsp. Drosophila simulans (strain wRi).